The chain runs to 310 residues: Apolipoprotein E (310 aa).

The N-terminal stretch at 1 to 18 is a signal peptide; sequence MKVLWAALVVTLLAGCQA. A run of 8 repeats spans residues 77-98, 99-120, 121-142, 143-164, 165-186, 187-204, 205-226, and 227-248. Residues 77 to 248 are 8 X 22 AA approximate tandem repeats; sequence VLIEETMKEV…RLDEVREQVQ (172 aa). Methionine 140 carries the post-translational modification Methionine sulfoxide. The residue at position 144 (serine 144) is a Phosphoserine. Positions 155–165 are LDL and other lipoprotein receptors binding; that stretch reads HLRKLRKRLLR. 159-162 lines the heparin pocket; sequence LRKR. The lipid-binding and lipoprotein association stretch occupies residues 203-283; sequence AATVRSLVSK…SWFEPLVQDM (81 aa). A heparin-binding site is contributed by 222–229; the sequence is GQRLRGRL. The segment at 259–310 is homooligomerization; that stretch reads NQMRLQAEAFHARLKSWFEPLVQDMQQRWAELVEKVQLAVGTSPTSESSEKQ. Residues 271 to 283 are specificity for association with VLDL; that stretch reads RLKSWFEPLVQDM.

The protein belongs to the apolipoprotein A1/A4/E family. As to quaternary structure, homotetramer. May interact with ABCA1; functionally associated with ABCA1 in the biogenesis of HDLs. May interact with APP/A4 amyloid-beta peptide; the interaction is extremely stable in vitro but its physiological significance is unclear. May interact with MAPT. May interact with MAP2. In the cerebrospinal fluid, interacts with secreted SORL1. Interacts with PMEL; this allows the loading of PMEL luminal fragment on ILVs to induce fibril nucleation. In terms of processing, APOE exists as multiple glycosylated and sialylated glycoforms within cells and in plasma. The extent of glycosylation and sialylation are tissue and context specific. Post-translationally, glycated in plasma VLDL. Phosphorylated by FAM20C in the extracellular medium.

The protein localises to the secreted. The protein resides in the extracellular space. It localises to the extracellular matrix. It is found in the extracellular vesicle. Its subcellular location is the endosome. The protein localises to the multivesicular body. Functionally, APOE is an apolipoprotein, a protein associating with lipid particles, that mainly functions in lipoprotein-mediated lipid transport between organs via the plasma and interstitial fluids. APOE is a core component of plasma lipoproteins and is involved in their production, conversion and clearance. Apolipoproteins are amphipathic molecules that interact both with lipids of the lipoprotein particle core and the aqueous environment of the plasma. As such, APOE associates with chylomicrons, chylomicron remnants, very low density lipoproteins (VLDL) and intermediate density lipoproteins (IDL) but shows a preferential binding to high-density lipoproteins (HDL). It also binds a wide range of cellular receptors including the LDL receptor/LDLR, the LDL receptor-related proteins LRP1, LRP2 and LRP8 and the very low-density lipoprotein receptor/VLDLR that mediate the cellular uptake of the APOE-containing lipoprotein particles. Finally, APOE also has a heparin-binding activity and binds heparan-sulfate proteoglycans on the surface of cells, a property that supports the capture and the receptor-mediated uptake of APOE-containing lipoproteins by cells. A main function of APOE is to mediate lipoprotein clearance through the uptake of chylomicrons, VLDLs, and HDLs by hepatocytes. APOE is also involved in the biosynthesis by the liver of VLDLs as well as their uptake by peripheral tissues ensuring the delivery of triglycerides and energy storage in muscle, heart and adipose tissues. By participating in the lipoprotein-mediated distribution of lipids among tissues, APOE plays a critical role in plasma and tissues lipid homeostasis. APOE is also involved in two steps of reverse cholesterol transport, the HDLs-mediated transport of cholesterol from peripheral tissues to the liver, and thereby plays an important role in cholesterol homeostasis. First, it is functionally associated with ABCA1 in the biogenesis of HDLs in tissues. Second, it is enriched in circulating HDLs and mediates their uptake by hepatocytes. APOE also plays an important role in lipid transport in the central nervous system, regulating neuron survival and sprouting. This chain is Apolipoprotein E (APOE), found in Tapirus indicus (Asiatic tapir).